Reading from the N-terminus, the 382-residue chain is Na(+)/H(+) antiporter NhaA (382 aa).

The next 11 helical transmembrane spans lie at 14–34 (AGGILLVIAAAIAMVIANSAM), 47–67 (FGMSVSHWINDGLMAVFFLLI), 87–107 (IFPAIAAVGGMLAPALIYVAF), 117–137 (GWAIPAATDIAFALGIMALLG), 146–166 (VFLLALAIIDDLGVVVIIALF), 171–191 (LSTIALTIGFIMTGVLFMLNA), 205–225 (LILWIAVLKSGVHATLAGVVI), 247–267 (ALHPYVAFAILPVFAFANAGI), 271–291 (GVSLAGLTSMLPLGVALGLFL), 321–341 (IFAVSVLCGIGFTMSIFISSL), and 353–373 (YARLGILMGSTTAALLGYSLL).

The protein belongs to the NhaA Na(+)/H(+) (TC 2.A.33) antiporter family.

It localises to the cell inner membrane. The enzyme catalyses Na(+)(in) + 2 H(+)(out) = Na(+)(out) + 2 H(+)(in). Na(+)/H(+) antiporter that extrudes sodium in exchange for external protons. In Vibrio cholerae serotype O1 (strain ATCC 39541 / Classical Ogawa 395 / O395), this protein is Na(+)/H(+) antiporter NhaA.